Consider the following 143-residue polypeptide: Transcription antitermination protein NusB (143 aa).

The protein belongs to the NusB family.

Involved in transcription antitermination. Required for transcription of ribosomal RNA (rRNA) genes. Binds specifically to the boxA antiterminator sequence of the ribosomal RNA (rrn) operons. The polypeptide is Transcription antitermination protein NusB (Dehalococcoides mccartyi (strain CBDB1)).